The primary structure comprises 122 residues: MEKNSFKLSNPLEMRMAESTRIRAKYPERVPVIVEKAGQSDVPDIDKKKYLVPADLTIGQFVYVVRKRIKLGAEKAIFVFVKNTLPPTAALMSAIYEEHKDEDGFLYMTYSGENTFGGSFYC.

G117 carries the Phosphatidylethanolamine amidated glycine lipid modification. Positions 118–122 (GSFYC) are cleaved as a propeptide — removed in mature form.

It belongs to the ATG8 family. In terms of assembly, interacts with ATG4. Interacts with NBR1. The C-terminal 5 residues are removed by ATG4 to expose Gly-117 at the C-terminus. This Gly-117 forms then a thioester bond with the 'Cys-558' of ATG7 (E1-like activating enzyme) before being transferred to the 'Cys-258' of ATG3 (the specific E2 conjugating enzyme), in order to be finally amidated with phosphatidylethanolamine. This lipid modification anchors ATG8 to autophagosomes. Constitutively expressed.

It localises to the cytoplasmic vesicle. The protein resides in the autophagosome membrane. It is found in the vacuole membrane. Its subcellular location is the cytoplasm. The protein localises to the cytoskeleton. Functionally, ubiquitin-like modifier involved in autophagosomes formation. May mediate the delivery of the autophagosomes to the vacuole via the microtubule cytoskeleton. The polypeptide is Autophagy-related protein 8b (ATG8B) (Arabidopsis thaliana (Mouse-ear cress)).